Here is a 499-residue protein sequence, read N- to C-terminus: DAZ protein 1 (499 aa).

Positions methionine 1–methionine 29 are disordered. Over residues glutamine 12 to glutamine 28 the composition is skewed to low complexity. The RRM domain maps to proline 66–isoleucine 144. Low complexity predominate over residues phenylalanine 195 to glutamine 224. Disordered regions lie at residues phenylalanine 195–glycine 304 and tyrosine 406–asparagine 499. A DAZ domain is found at threonine 214 to aspartate 236. Residues glutamate 251 to serine 262 are compositionally biased toward basic and acidic residues. Polar residues predominate over residues valine 263 to tyrosine 279. Residues serine 280–glycine 304 are compositionally biased toward low complexity. Residues tyrosine 406–leucine 425 are compositionally biased toward polar residues. A compositionally biased stretch (basic and acidic residues) spans lysine 438–threonine 447. Residues leucine 480 to asparagine 499 are compositionally biased toward low complexity.

The protein belongs to the RRM DAZ family. In terms of tissue distribution, germline specific. More strongly expressed during oogenesis than during spermatogenesis. During the larval stages, it is more abundant at the distal region than the proximal region of the gonad. In young adult hermaphrodites, it is expressed at a very low level in the distal mitotic region of the gonad, and begins to accumulate in the meiotic transition zone. Highly expressed in the proximal pachytene region. Not expressed in mature oocytes. Not expressed in the spermatheca. Weakly or not expressed in the germline of adult males.

Functionally, RNA-binding protein that plays a central role in oogenesis, but not for spermatogenesis. Required for meiotic entry and germline differentiation, at the pachytene stage of meiosis I of female germline regardless of the sex of the soma. May act by regulating translation of specific mRNAs, possibly by binding to their 3'-UTR. This chain is DAZ protein 1 (daz-1), found in Caenorhabditis elegans.